A 322-amino-acid chain; its full sequence is MMQNNPFPYSNTEKRYHTLNYHLREHFGHKVFKVALDGGFDCPNRDGTVAHGGCTFCSAAGSGDFAGNRTDDLITQFHDIKNRMHEKWKDGKYIAYFQAFTNTHAPVEVLREKFESVLALDDVVGISIATRPDCLPDDVVDYLAELNERTYLWVELGLQTVHERTALLINRAHDFNCYVEGVNKLRKHGIRVCSHIINGLPLEDRDMMMETAKAVADLDVQGIKIHLLHLLKGTPMVKQYEKGKLEFLSQDDYVQLVCDQLEIIPPEMIVHRITGDGPIELMIGPMWSVNKWEVLGAINKELENRGSYQGKFFQRLEEESAL.

Positions 26–267 (HFGHKVFKVA…CDQLEIIPPE (242 aa)) constitute a Radical SAM core domain. 3 residues coordinate [4Fe-4S] cluster: cysteine 42, cysteine 54, and cysteine 57.

This sequence belongs to the radical SAM superfamily. The cofactor is [4Fe-4S] cluster.

This is an uncharacterized protein from Bacillus subtilis (strain 168).